Here is a 1275-residue protein sequence, read N- to C-terminus: MSSPKWTKEQLEVIESRECNLLVAAAAGSGKTAVLVERIIQMITSRENPIDIDKLLVVTFTNAAASEMRERIGDAIGKALDENPENKHLQNQLVLLNKSSITTIHSFCLDVIKSNFHRINLDPNFRIGDQTECAILKQEAIEEVFEDLYEERDEGFLNLVESYAERGGDKEVQDIILGIYSFAMASPEPKKWLIDSAERFNIDENFDFSQSIWARAILDTVKIEINGLCLNMERALKEVESIEELETFAEKLSVEYKKIADISQACNKSWDEAYKKMASMSFENYVKGVKRISKDAPSYIKESKEKAKTIRDKTKKSLESIVSATFNKDNDSIREEIKYLYNIVKPISSVVLRFEEEYSNKKREKGIIDFNDIEHFALNILTDVDEKGNIVPSDIAVGYRNKFYEIFIDEYQDSNLVQEVLLKAVANTETPNRFMVGDVKQSIYRFRQAKPELFLQKYNNYNDKKGSSHRKIMLYKNFRSREEVVDAVNYIFENIMNENIGEIEYTEKERLNLGANFNVDTDEKSIIGGATEIHLIQKDNKLDDDIINDKDDRINNKENEIEEEEKLDNIQLEARMVGNIIKDLMKVNEDGKIQKVYDKGIDGYRPVEFRDIVILLRATSAWAPVFADELMNMDIPTYADVGVGYFDTIEIKTILSLLQIIDNPMQDIPLISVLKSPIFGFTPEDLIDIRVQSKDKIFYEVLKSTAEYDGFTDSQNENESEFIPSEECINKSKDFLIKLKEFKEKSMYMSTDEFIWYLYTRTGYYAYVGALPGGSQRQANLKVLFERAKQFEETSLKGIFNFVNFIEKLKKSSSDMGSAKTLGENANVVRIMSIHKSKGLEFPVVICSAMGKNFNTQDFKKSILYHHNLGYGPQFVDYERRISFPSIAKEALKSKINIENLSEEMRVLYVAFTRAKEKLIITGSTRNIQDSIKRWSNGIESLDTISQYEILKGKNFLDWIMPCVLRHRDLSNLLEEVGLDAVFNVEHNSKWYGKLWNKNDILVEKKSDEEKESIEEILEKIDVNNPDSDYYGEIEEKLNYIYPYEFSTRKPATISVTEIKKIQNNYEEELINTIFEQKVILKKPLFIQNEEEREKISGTERGTIVHLVMEVLDLKNVSSVNDIKSQIRGFVSKGIITEKQASIVNPYKIYKFFASNIGKRMLNAEIINREKSIYAQVNMKDIYIYEKLINNDDKKLYDNESVMLRGIVDAYFEEDNQIVLVDYKTDFVNEENINQIIEKYKKQLDLYADIIETLTGKSVKEKCIYLFGVDEAVCY.

Residues 4-481 (PKWTKEQLEV…IMLYKNFRSR (478 aa)) enclose the UvrD-like helicase ATP-binding domain. ATP is bound at residue 25–32 (AAAGSGKT). The region spanning 531 to 839 (TEIHLIQKDN…RIMSIHKSKG (309 aa)) is the UvrD-like helicase C-terminal domain.

The protein belongs to the helicase family. AddA subfamily. As to quaternary structure, heterodimer of AddA and AddB/RexB. It depends on Mg(2+) as a cofactor.

It carries out the reaction Couples ATP hydrolysis with the unwinding of duplex DNA by translocating in the 3'-5' direction.. It catalyses the reaction ATP + H2O = ADP + phosphate + H(+). The heterodimer acts as both an ATP-dependent DNA helicase and an ATP-dependent, dual-direction single-stranded exonuclease. Recognizes the chi site generating a DNA molecule suitable for the initiation of homologous recombination. The AddA nuclease domain is required for chi fragment generation; this subunit has the helicase and 3' -&gt; 5' nuclease activities. The chain is ATP-dependent helicase/nuclease subunit A from Clostridioides difficile (strain 630) (Peptoclostridium difficile).